The sequence spans 392 residues: Olfactomedin-like protein 3 (392 aa).

An N-terminal signal peptide occupies residues 1–21; that stretch reads MGPWRCLLLLPLLAAAPRAQQ. Positions 25–99 form a coiled coil; it reads MEYVERRLAL…REVDYLETQN (75 aa). The 257-residue stretch at 132 to 388 folds into the Olfactomedin-like domain; sequence DCSDTIASVR…QIIYRMEMKK (257 aa). C133 and C315 form a disulfide bridge. N-linked (GlcNAc...) asparagine glycans are attached at residues N175 and N235.

It belongs to the OLFML3 family.

The protein localises to the secreted. In terms of biological role, secreted scaffold protein that plays an essential role in dorsoventral patterning during early development. Stabilizes axial formation by restricting chordin (CHRD) activity on the dorsal side. Acts by facilitating the association between the tolloid proteases and their substrate chordin (CHRD), leading to enhance chordin (CHRD) degradation. This is Olfactomedin-like protein 3 (OLFML3) from Gallus gallus (Chicken).